The primary structure comprises 192 residues: Lipid A acyltransferase PagP (192 aa).

Positions methionine 1–alanine 29 are cleaved as a signal peptide. Catalysis depends on residues histidine 64, aspartate 107, and serine 108.

This sequence belongs to the lipid A palmitoyltransferase family. As to quaternary structure, homodimer.

The protein resides in the cell outer membrane. It carries out the reaction a lipid A + a 1,2-diacyl-sn-glycero-3-phosphocholine = a hepta-acyl lipid A + a 2-acyl-sn-glycero-3-phosphocholine. It catalyses the reaction a lipid IVA + a 1,2-diacyl-sn-glycero-3-phosphocholine = a lipid IVB + a 2-acyl-sn-glycero-3-phosphocholine. The enzyme catalyses a lipid IIA + a 1,2-diacyl-sn-glycero-3-phosphocholine = a lipid IIB + a 2-acyl-sn-glycero-3-phosphocholine. Functionally, transfers a fatty acid residue from the sn-1 position of a phospholipid to the N-linked hydroxyfatty acid chain on the proximal unit of lipid A or its precursors. This chain is Lipid A acyltransferase PagP, found in Citrobacter rodentium (strain ICC168) (Citrobacter freundii biotype 4280).